Consider the following 561-residue polypeptide: MIRAQQELLVALGDALAELAPEQPPIAAFESPKQAAHGDLAITSAMQLAKPLKRNPRELAQALIDALQRREAVQRWVAALEIAGPGFINLRLKDTTKQQIVAEVLASGTDFGRQPATSERALVEFVSANPTGPLHVGHGRQAALGDAICKLFETQGWQVTREFYYNDAGVQIGTLAASTQARLQGLKPGDAGWPESAYNGDYIADIAADFLARKTVKADDREFTASGDPADLDGIRQFAVAYLRHEQDLDLQAFGVRFDHYFLESSLYATGRVEATVGKLVAAGKTFEDGGALWLRTTDYGDDKDRVMKKSDGSYTYFVPDVAYHVNKWERGYHKVINIQGSDHHGTIARVRAGLQAADVGIPAGYPDYVLHKMVTVMRGGEEVKISKRAGSYVTLRDLIDWTGKDAVRFFLISRKADTEFVFDVDLALKKNDENPVYYVQYAHARICSVIVQWREQQAGDPATLAQADLARLVAPTEAALMLKLAAYPVMLSGAAESLAPHDVAFYLRDLAGAFHSYYAAERFLTDDPALSRARLALLAATAQVLRNGLAVLGVSAPDRM.

A 'HIGH' region motif is present at residues 128–138 (ANPTGPLHVGH).

The protein belongs to the class-I aminoacyl-tRNA synthetase family. Monomer.

The protein localises to the cytoplasm. The catalysed reaction is tRNA(Arg) + L-arginine + ATP = L-arginyl-tRNA(Arg) + AMP + diphosphate. The protein is Arginine--tRNA ligase of Methylibium petroleiphilum (strain ATCC BAA-1232 / LMG 22953 / PM1).